We begin with the raw amino-acid sequence, 335 residues long: Cobalt-precorrin-5B C(1)-methyltransferase (335 aa).

It belongs to the CbiD family.

It catalyses the reaction Co-precorrin-5B + S-adenosyl-L-methionine = Co-precorrin-6A + S-adenosyl-L-homocysteine. The protein operates within cofactor biosynthesis; adenosylcobalamin biosynthesis; cob(II)yrinate a,c-diamide from sirohydrochlorin (anaerobic route): step 6/10. Its function is as follows. Catalyzes the methylation of C-1 in cobalt-precorrin-5B to form cobalt-precorrin-6A. In Methanospirillum hungatei JF-1 (strain ATCC 27890 / DSM 864 / NBRC 100397 / JF-1), this protein is Cobalt-precorrin-5B C(1)-methyltransferase.